We begin with the raw amino-acid sequence, 180 residues long: Bifunctional protein PyrR (180 aa).

Positions 101–113 (LIVVDDVLFTGRT) match the PRPP-binding motif.

It belongs to the purine/pyrimidine phosphoribosyltransferase family. PyrR subfamily. In terms of assembly, homodimer and homohexamer; in equilibrium.

It catalyses the reaction UMP + diphosphate = 5-phospho-alpha-D-ribose 1-diphosphate + uracil. Its function is as follows. Regulates transcriptional attenuation of the pyrimidine nucleotide (pyr) operon by binding in a uridine-dependent manner to specific sites on pyr mRNA. This disrupts an antiterminator hairpin in the RNA and favors formation of a downstream transcription terminator, leading to a reduced expression of downstream genes. Functionally, also displays a weak uracil phosphoribosyltransferase activity which is not physiologically significant. This Bacillus pumilus (strain SAFR-032) protein is Bifunctional protein PyrR.